The primary structure comprises 267 residues: DNA repair protein RecO (267 aa).

It belongs to the RecO family.

Involved in DNA repair and RecF pathway recombination. This chain is DNA repair protein RecO, found in Prochlorococcus marinus (strain MIT 9303).